A 418-amino-acid chain; its full sequence is 3-isopropylmalate dehydratase large subunit (418 aa).

Residues Cys298, Cys358, and Cys361 each contribute to the [4Fe-4S] cluster site.

This sequence belongs to the aconitase/IPM isomerase family. LeuC type 2 subfamily. In terms of assembly, heterodimer of LeuC and LeuD. It depends on [4Fe-4S] cluster as a cofactor.

The catalysed reaction is (2R,3S)-3-isopropylmalate = (2S)-2-isopropylmalate. The protein operates within amino-acid biosynthesis; L-leucine biosynthesis; L-leucine from 3-methyl-2-oxobutanoate: step 2/4. Functionally, catalyzes the isomerization between 2-isopropylmalate and 3-isopropylmalate, via the formation of 2-isopropylmaleate. This is 3-isopropylmalate dehydratase large subunit from Caldanaerobacter subterraneus subsp. tengcongensis (strain DSM 15242 / JCM 11007 / NBRC 100824 / MB4) (Thermoanaerobacter tengcongensis).